The sequence spans 185 residues: Ribosome-recycling factor (185 aa).

The protein belongs to the RRF family.

It localises to the cytoplasm. Responsible for the release of ribosomes from messenger RNA at the termination of protein biosynthesis. May increase the efficiency of translation by recycling ribosomes from one round of translation to another. The chain is Ribosome-recycling factor from Streptococcus agalactiae serotype V (strain ATCC BAA-611 / 2603 V/R).